Here is a 433-residue protein sequence, read N- to C-terminus: MADTRGSTSSGGGDDRGREGHDDFTGGGQYNRYHRILEAVPSPLVRRENGVHHQYPTGLIHHPSSTMPVAPCSYVPRYTMVPTSAMLPLQHHHRQLQISQENFQDRVPSNNVAAPHLPSNFQDLRPMCNGPPFMSYGQTASNRNVLYQNLTPYSFNAWASNNMPRNPVYTSYHPTAIEDPHATPFHINNHDTDQGFFTVSTSFRVDQSFVHAPSPFPPVSSSSRSFSSAQISNGPIDAKKAKKSDIKDQPIVLRRSDTESEKNDELDQTPASEPSSMSHNSANSTIRFNCREYRVILRKELTNSDVGNIGRIVMPKRDAEAHLPALHQREGVMLKMDDFKLETTWNFKYRFWPNNKSRMYVLESTGGFVKQHGLQTGDIFIIYKSSESEKLVVRGEKAIKPNVIMPIVDCSCKNDLNNSEECGFAISLLTKKT.

Disordered stretches follow at residues 1 to 29 (MADT…GGGQ) and 216 to 283 (FPPV…NSAN). The segment covering 13 to 24 (GDDRGREGHDDF) has biased composition (basic and acidic residues). Residues 216-229 (FPPVSSSSRSFSSA) are compositionally biased toward low complexity. The segment covering 237 to 265 (DAKKAKKSDIKDQPIVLRRSDTESEKNDE) has biased composition (basic and acidic residues). Over residues 269–283 (TPASEPSSMSHNSAN) the composition is skewed to polar residues. Residues 297 to 399 (LRKELTNSDV…KLVVRGEKAI (103 aa)) constitute a DNA-binding region (TF-B3).

It localises to the nucleus. In terms of biological role, probable transcription regulator that binds specifically to the DNA sequence 5'-CATGC-3' of the IDE1 element found in the promoter of the barley iron deficiency-inducible gene IDS2. The chain is B3 domain-containing protein Os04g0676600 from Oryza sativa subsp. japonica (Rice).